A 396-amino-acid chain; its full sequence is Putative N(4)-(beta-N-acetylglucosaminyl)-L-asparaginase GG24090 (396 aa).

The signal sequence occupies residues 1–23 (MKRHLGTCLWVLCLASTAFSSLA). Cystine bridges form between C100–C105 and C199–C215. Catalysis depends on T246, which acts as the Nucleophile. Residues 274-277 (RVGD) and 297-300 (TGDG) contribute to the substrate site. Cysteines 357 and 384 form a disulfide.

It belongs to the Ntn-hydrolase family. As to quaternary structure, heterotetramer of two alpha and two beta chains arranged as a dimer of alpha/beta heterodimers. Cleaved into an alpha and beta chain by autocatalysis; this activates the enzyme. The N-terminal residue of the beta subunit is responsible for the nucleophile hydrolase activity.

The catalysed reaction is N(4)-(beta-N-acetyl-D-glucosaminyl)-L-asparagine + H2O = N-acetyl-beta-D-glucosaminylamine + L-aspartate + H(+). Functionally, cleaves the GlcNAc-Asn bond which joins oligosaccharides to the peptide of asparagine-linked glycoproteins. The polypeptide is Putative N(4)-(beta-N-acetylglucosaminyl)-L-asparaginase GG24090 (Drosophila erecta (Fruit fly)).